The sequence spans 396 residues: Ribosomal RNA large subunit methyltransferase I (396 aa).

In terms of domain architecture, PUA spans 2–81 (TVRLILAKGR…EVIDCAFFIR (80 aa)).

This sequence belongs to the methyltransferase superfamily. RlmI family.

The protein localises to the cytoplasm. It catalyses the reaction cytidine(1962) in 23S rRNA + S-adenosyl-L-methionine = 5-methylcytidine(1962) in 23S rRNA + S-adenosyl-L-homocysteine + H(+). Its function is as follows. Specifically methylates the cytosine at position 1962 (m5C1962) of 23S rRNA. The protein is Ribosomal RNA large subunit methyltransferase I of Yersinia pestis bv. Antiqua (strain Antiqua).